Reading from the N-terminus, the 74-residue chain is Large ribosomal subunit protein bL31 (74 aa).

Residues Cys-16, Cys-18, Cys-38, and Cys-41 each contribute to the Zn(2+) site.

It belongs to the bacterial ribosomal protein bL31 family. Type A subfamily. In terms of assembly, part of the 50S ribosomal subunit. The cofactor is Zn(2+).

Its function is as follows. Binds the 23S rRNA. The sequence is that of Large ribosomal subunit protein bL31 from Salinispora tropica (strain ATCC BAA-916 / DSM 44818 / JCM 13857 / NBRC 105044 / CNB-440).